The sequence spans 163 residues: Nucleotide-binding protein RBAM_011030 (163 aa).

It belongs to the YajQ family.

Its function is as follows. Nucleotide-binding protein. The sequence is that of Nucleotide-binding protein RBAM_011030 from Bacillus velezensis (strain DSM 23117 / BGSC 10A6 / LMG 26770 / FZB42) (Bacillus amyloliquefaciens subsp. plantarum).